The following is a 337-amino-acid chain: Large ribosomal subunit protein uL3 (337 aa).

Residues 1–32 are disordered; sequence MAKGHRPRRGSLAYSPRKRSQSHIPRFRSWPE.

The protein belongs to the universal ribosomal protein uL3 family. In terms of assembly, part of the 50S ribosomal subunit. Forms a cluster with proteins L14 and L24e.

Functionally, one of the primary rRNA binding proteins, it binds directly near the 3'-end of the 23S rRNA, where it nucleates assembly of the 50S subunit. The polypeptide is Large ribosomal subunit protein uL3 (Methanococcoides burtonii (strain DSM 6242 / NBRC 107633 / OCM 468 / ACE-M)).